A 247-amino-acid polypeptide reads, in one-letter code: MEMAPAAQVASNPRTVEDIFKDYSARRGALVRALTSDVDEFFGLCDPDKENLCLYGLANGSWEVALPAEEVPPELPEPALGINFARDGMNRRDWLSLVAVHSDSWLVSVAFFFAARLNGNERKRLFNMINDLPTVYEALVDRKHVRDRSGVDSSGKSKHSTKRTGEGQVKRSRVVAEEYEDDDEEHNETFCGTCGGLYNANEFWIGCDICERWFHGKCVRITPAKAEHIKHYKCPDCSSSSSKKTRL.

The interval 147–178 (DRSGVDSSGKSKHSTKRTGEGQVKRSRVVAEE) is disordered. The PHD-type zinc finger occupies 188 to 240 (ETFCGTCGGLYNANEFWIGCDICERWFHGKCVRITPAKAEHIKHYKCPDCSSS).

The protein belongs to the Alfin family. In terms of assembly, interacts with H3K4me3 and to a lesser extent with H3K4me2.

The protein resides in the nucleus. Histone-binding component that specifically recognizes H3 tails trimethylated on 'Lys-4' (H3K4me3), which mark transcription start sites of virtually all active genes. This Oryza sativa subsp. indica (Rice) protein is PHD finger protein ALFIN-LIKE 3.